A 100-amino-acid chain; its full sequence is MERRDFKEQLKKTAHLARLHLTPEEEELFAKQLQNILDYFKKLQELDTSNVEPMAHVLPLYNIWREDEVRESISQEEALKNAPEIEDLGFKIPRIMKREE.

It belongs to the GatC family. Heterotrimer of A, B and C subunits.

It catalyses the reaction L-glutamyl-tRNA(Gln) + L-glutamine + ATP + H2O = L-glutaminyl-tRNA(Gln) + L-glutamate + ADP + phosphate + H(+). The enzyme catalyses L-aspartyl-tRNA(Asn) + L-glutamine + ATP + H2O = L-asparaginyl-tRNA(Asn) + L-glutamate + ADP + phosphate + 2 H(+). Allows the formation of correctly charged Asn-tRNA(Asn) or Gln-tRNA(Gln) through the transamidation of misacylated Asp-tRNA(Asn) or Glu-tRNA(Gln) in organisms which lack either or both of asparaginyl-tRNA or glutaminyl-tRNA synthetases. The reaction takes place in the presence of glutamine and ATP through an activated phospho-Asp-tRNA(Asn) or phospho-Glu-tRNA(Gln). This Dictyoglomus thermophilum (strain ATCC 35947 / DSM 3960 / H-6-12) protein is Aspartyl/glutamyl-tRNA(Asn/Gln) amidotransferase subunit C.